The primary structure comprises 166 residues: Protein BioX (166 aa).

5 consecutive transmembrane segments (helical) span residues 12–32, 33–53, 55–75, 87–107, and 117–137; these read ISLL…TGIP, GSEF…FGFK, YFLA…HSIL, VGLI…AGPI, and AFTL…GMVI.

Its subcellular location is the cell membrane. Does not seem to be a permease of pimelate. Its role in biotin synthesis is not clear. The protein is Protein BioX (bioX) of Lysinibacillus sphaericus (Bacillus sphaericus).